The chain runs to 332 residues: Leucine carboxyl methyltransferase 1 homolog (332 aa).

Residues K22, R57, G83, D107, 153-154, and E180 each bind S-adenosyl-L-methionine; that span reads DL.

This sequence belongs to the methyltransferase superfamily. LCMT family.

The protein localises to the cytoplasm. Its subcellular location is the membrane. It carries out the reaction [phosphatase 2A protein]-C-terminal L-leucine + S-adenosyl-L-methionine = [phosphatase 2A protein]-C-terminal L-leucine methyl ester + S-adenosyl-L-homocysteine. Functionally, methylates the carboxyl group of the C-terminal leucine residue of protein phosphatase 2A (PP2A) catalytic subunits to form alpha-leucine ester residues. Involved in brassinosteroid (BR) signaling. Plays a negative role in BR signaling pathway. Functions as a positive regulator of BRI1 receptor-kinase degradation. Methylates PP2A, thus facilitating its association with activated BRI1. This leads to receptor dephosphorylation and degradation, and thus to the termination of BR signaling. May act upstream of ASK7/BIN2. Involved in methylation of PP2A during environmental stress responses. The sequence is that of Leucine carboxyl methyltransferase 1 homolog from Arabidopsis thaliana (Mouse-ear cress).